The primary structure comprises 1179 residues: DNA-directed RNA polymerase subunit beta' (1179 aa).

Zn(2+) is bound by residues Cys-60, Cys-62, Cys-75, and Cys-78. The Mg(2+) site is built by Asp-449, Asp-451, and Asp-453. Residues Cys-796, Cys-871, Cys-878, and Cys-881 each coordinate Zn(2+).

Belongs to the RNA polymerase beta' chain family. In terms of assembly, the RNAP catalytic core consists of 2 alpha, 1 beta, 1 beta' and 1 omega subunit. When a sigma factor is associated with the core the holoenzyme is formed, which can initiate transcription. The cofactor is Mg(2+). It depends on Zn(2+) as a cofactor.

The catalysed reaction is RNA(n) + a ribonucleoside 5'-triphosphate = RNA(n+1) + diphosphate. DNA-dependent RNA polymerase catalyzes the transcription of DNA into RNA using the four ribonucleoside triphosphates as substrates. The chain is DNA-directed RNA polymerase subunit beta' from Symbiobacterium thermophilum (strain DSM 24528 / JCM 14929 / IAM 14863 / T).